Consider the following 244-residue polypeptide: Phosphoadenosine 5'-phosphosulfate reductase (244 aa).

The Nucleophile; cysteine thiosulfonate intermediate role is filled by C239.

It belongs to the PAPS reductase family. CysH subfamily.

The protein localises to the cytoplasm. The enzyme catalyses [thioredoxin]-disulfide + sulfite + adenosine 3',5'-bisphosphate + 2 H(+) = [thioredoxin]-dithiol + 3'-phosphoadenylyl sulfate. It functions in the pathway sulfur metabolism; hydrogen sulfide biosynthesis; sulfite from sulfate: step 3/3. Its function is as follows. Catalyzes the formation of sulfite from phosphoadenosine 5'-phosphosulfate (PAPS) using thioredoxin as an electron donor. The sequence is that of Phosphoadenosine 5'-phosphosulfate reductase from Pectobacterium carotovorum subsp. carotovorum (strain PC1).